The sequence spans 332 residues: BRISC and BRCA1-A complex member 1 (332 aa).

An N-acetylmethionine modification is found at M1. The interval 1–88 (MEVAEPSCPT…PPPAPEVQVR (88 aa)) is disordered. Over residues 10-23 (TEEEEEEEEEEEQS) the composition is skewed to acidic residues. Phosphoserine is present on residues S32, S52, and S60. Positions 70–83 (GAGPKPWQVPPPAP) are enriched in pro residues. The segment at 98 to 301 (VIICLDLSEE…LELHNCMAKL (204 aa)) is VWFA-like.

This sequence belongs to the BABAM1 family. Component of the ARISC complex, at least composed of UIMC1/RAP80, ABRAXAS1, BRCC3/BRCC36, BABAM2 and BABAM1/NBA1. Component of the BRCA1-A complex, at least composed of BRCA1, BARD1, UIMC1/RAP80, ABRAXAS1, BRCC3/BRCC36, BABAM2 and BABAM1/NBA1. In the BRCA1-A complex, interacts directly with ABRAXAS1 and BABAM2. Component of the BRISC complex, at least composed of ABRAXAS2, BRCC3/BRCC36, BABAM2 and BABAM1/NBA1. Identified in a complex with SHMT2 and the other subunits of the BRISC complex.

It is found in the cytoplasm. The protein resides in the nucleus. Component of the BRCA1-A complex, a complex that specifically recognizes 'Lys-63'-linked ubiquitinated histones H2A and H2AX at DNA lesions sites, leading to target the BRCA1-BARD1 heterodimer to sites of DNA damage at double-strand breaks (DSBs). The BRCA1-A complex also possesses deubiquitinase activity that specifically removes 'Lys-63'-linked ubiquitin on histones H2A and H2AX. In the BRCA1-A complex, it is required for the complex integrity and its localization at DSBs. Component of the BRISC complex, a multiprotein complex that specifically cleaves 'Lys-63'-linked ubiquitin in various substrates. In these 2 complexes, it is probably required to maintain the stability of BABAM2 and help the 'Lys-63'-linked deubiquitinase activity mediated by BRCC3/BRCC36 component. The BRISC complex is required for normal mitotic spindle assembly and microtubule attachment to kinetochores via its role in deubiquitinating NUMA1. Plays a role in interferon signaling via its role in the deubiquitination of the interferon receptor IFNAR1; deubiquitination increases IFNAR1 activity by enhancing its stability and cell surface expression. Down-regulates the response to bacterial lipopolysaccharide (LPS) via its role in IFNAR1 deubiquitination. The chain is BRISC and BRCA1-A complex member 1 (BABAM1) from Bos taurus (Bovine).